A 298-amino-acid chain; its full sequence is HTH-type transcriptional regulator ArgP (298 aa).

Residues 4–60 form the HTH lysR-type domain; it reads LDYRWIEALDSVVSKGSFERAAEQLFISQSAVSQRIKQLEKYLAQPVLIREQPPRPT. The H-T-H motif DNA-binding region spans 21–40; that stretch reads FERAAEQLFISQSAVSQRIK.

The protein belongs to the LysR transcriptional regulatory family. Homodimer.

In terms of biological role, controls the transcription of genes involved in arginine and lysine metabolism. This chain is HTH-type transcriptional regulator ArgP, found in Vibrio cholerae serotype O1 (strain ATCC 39315 / El Tor Inaba N16961).